A 455-amino-acid chain; its full sequence is Bifunctional protein GlmU (455 aa).

The pyrophosphorylase stretch occupies residues 1-225; sequence MEVVILAAGQ…IWETLGVNSK (225 aa). UDP-N-acetyl-alpha-D-glucosamine-binding positions include 6–9, Lys-20, Gln-71, 76–77, 98–100, Gly-135, Glu-150, Asn-165, and Asn-223; these read LAAG, GT, and YGD. Asp-100 provides a ligand contact to Mg(2+). Asn-223 lines the Mg(2+) pocket. Residues 226-246 are linker; the sequence is AQLAELERLHQRNIATRLMED. The segment at 247-455 is N-acetyltransferase; it reads GVTLFDPSRI…KRPVKKKAGE (209 aa). Residues Arg-329 and Lys-347 each contribute to the UDP-N-acetyl-alpha-D-glucosamine site. Residue His-359 is the Proton acceptor of the active site. The UDP-N-acetyl-alpha-D-glucosamine site is built by Tyr-362 and Asn-373. Acetyl-CoA-binding positions include Ala-376, 382 to 383, Ser-401, Ala-419, and Arg-436; that span reads NY.

It in the N-terminal section; belongs to the N-acetylglucosamine-1-phosphate uridyltransferase family. This sequence in the C-terminal section; belongs to the transferase hexapeptide repeat family. In terms of assembly, homotrimer. Mg(2+) is required as a cofactor.

It is found in the cytoplasm. The catalysed reaction is alpha-D-glucosamine 1-phosphate + acetyl-CoA = N-acetyl-alpha-D-glucosamine 1-phosphate + CoA + H(+). It catalyses the reaction N-acetyl-alpha-D-glucosamine 1-phosphate + UTP + H(+) = UDP-N-acetyl-alpha-D-glucosamine + diphosphate. It participates in nucleotide-sugar biosynthesis; UDP-N-acetyl-alpha-D-glucosamine biosynthesis; N-acetyl-alpha-D-glucosamine 1-phosphate from alpha-D-glucosamine 6-phosphate (route II): step 2/2. It functions in the pathway nucleotide-sugar biosynthesis; UDP-N-acetyl-alpha-D-glucosamine biosynthesis; UDP-N-acetyl-alpha-D-glucosamine from N-acetyl-alpha-D-glucosamine 1-phosphate: step 1/1. Its pathway is bacterial outer membrane biogenesis; LPS lipid A biosynthesis. Functionally, catalyzes the last two sequential reactions in the de novo biosynthetic pathway for UDP-N-acetylglucosamine (UDP-GlcNAc). The C-terminal domain catalyzes the transfer of acetyl group from acetyl coenzyme A to glucosamine-1-phosphate (GlcN-1-P) to produce N-acetylglucosamine-1-phosphate (GlcNAc-1-P), which is converted into UDP-GlcNAc by the transfer of uridine 5-monophosphate (from uridine 5-triphosphate), a reaction catalyzed by the N-terminal domain. The polypeptide is Bifunctional protein GlmU (Aromatoleum aromaticum (strain DSM 19018 / LMG 30748 / EbN1) (Azoarcus sp. (strain EbN1))).